A 613-amino-acid chain; its full sequence is ATP-dependent zinc metalloprotease FtsH (613 aa).

Residues 1-4 lie on the Cytoplasmic side of the membrane; that stretch reads MVKN. Residues 5 to 25 traverse the membrane as a helical segment; it reads LIFWLVITVVLMSVFQNFNSS. The Extracellular portion of the chain corresponds to 26-98; the sequence is DTSNHRVDYS…VGEIPEEPSL (73 aa). Residues 99–119 form a helical membrane-spanning segment; it reads LISIFISWFPMLLLIGVWIFF. Over 120–613 the chain is Cytoplasmic; it reads MRQMQMGGGK…WLEVDQKKDI (494 aa). 192–199 contacts ATP; sequence GPPGTGKT. His-414 contacts Zn(2+). Glu-415 is an active-site residue. Residues His-418 and Asp-492 each contribute to the Zn(2+) site.

The protein in the central section; belongs to the AAA ATPase family. It in the C-terminal section; belongs to the peptidase M41 family. As to quaternary structure, homohexamer. The cofactor is Zn(2+).

Its subcellular location is the cell membrane. Acts as a processive, ATP-dependent zinc metallopeptidase for both cytoplasmic and membrane proteins. Plays a role in the quality control of integral membrane proteins. The protein is ATP-dependent zinc metalloprotease FtsH of Buchnera aphidicola subsp. Schizaphis graminum (strain Sg).